The primary structure comprises 591 residues: Aspartate--tRNA(Asp/Asn) ligase (591 aa).

Glu174 lines the L-aspartate pocket. Residues Gln198–Lys201 are aspartate. L-aspartate is bound at residue Arg220. ATP contacts are provided by residues Arg220 to Glu222 and Gln229. His450 contributes to the L-aspartate binding site. Glu483 is an ATP binding site. Arg490 contributes to the L-aspartate binding site. Residue Gly535 to Arg538 participates in ATP binding.

This sequence belongs to the class-II aminoacyl-tRNA synthetase family. Type 1 subfamily. In terms of assembly, homodimer.

It localises to the cytoplasm. It carries out the reaction tRNA(Asx) + L-aspartate + ATP = L-aspartyl-tRNA(Asx) + AMP + diphosphate. Functionally, aspartyl-tRNA synthetase with relaxed tRNA specificity since it is able to aspartylate not only its cognate tRNA(Asp) but also tRNA(Asn). Reaction proceeds in two steps: L-aspartate is first activated by ATP to form Asp-AMP and then transferred to the acceptor end of tRNA(Asp/Asn). The polypeptide is Aspartate--tRNA(Asp/Asn) ligase (Pseudomonas syringae pv. syringae (strain B728a)).